We begin with the raw amino-acid sequence, 514 residues long: Beta-secretase 2 (514 aa).

The N-terminal stretch at 1–19 is a signal peptide; sequence MGALLRALLLLVLAQWLLS. Residues 20–62 constitute a propeptide that is removed on maturation; it reads AVPALAPAPFTLPLQVAGATNHRASAVPGLGTPELPRADGLAL. At 20–469 the chain is on the extracellular side; the sequence is AVPALAPAPF…NEPILWIVSY (450 aa). The Peptidase A1 domain occupies 88 to 425; it reads YYLEMLIGTP…DRAQRRVGFA (338 aa). The active site involves Asp-106. N-linked (GlcNAc...) asparagine glycosylation occurs at Asn-166. Cystine bridges form between Cys-229-Cys-429, Cys-288-Cys-453, and Cys-340-Cys-389. The active site involves Asp-299. A glycan (N-linked (GlcNAc...) asparagine) is linked at Asn-362. The chain crosses the membrane as a helical span at residues 470 to 490; that stretch reads ALMSVCGAILLVLILLLLLPL. The Cytoplasmic portion of the chain corresponds to 491 to 514; that stretch reads HCRHAPRDPEVVNDESSLVRHRWK.

Belongs to the peptidase A1 family. In terms of assembly, monomer. Interacts with RTN3 and RTN4. Undergoes autoproteolytic cleavage. In terms of processing, glycosylated. As to expression, high expression in pancreatic islets. Expressed at much lower levels in the pituitary, colon, and ovaries and is nearly absent from all the other tissues.

The protein resides in the cell membrane. It localises to the golgi apparatus. Its subcellular location is the endoplasmic reticulum. It is found in the endosome. The protein localises to the melanosome. It catalyses the reaction Broad endopeptidase specificity. Cleaves Glu-Val-Asn-Leu-|-Asp-Ala-Glu-Phe in the Swedish variant of Alzheimer's amyloid precursor protein.. Responsible for the proteolytic processing of the amyloid precursor protein (APP). Cleaves APP, between residues 690 and 691, leading to the generation and extracellular release of beta-cleaved soluble APP, and a corresponding cell-associated C-terminal fragment which is later released by gamma-secretase. It has also been shown that it can cleave APP between residues 671 and 672. Involved in the proteolytic shedding of PMEL at early stages of melanosome biogenesis. Cleaves PMEL within the M-beta fragment to release the amyloidogenic PMEL luminal fragment containing M-alpha and a small portion of M-beta N-terminus. This is a prerequisite step for subsequent processing and assembly of PMEL fibrils into amyloid sheets. Responsible also for the proteolytic processing of CLTRN in pancreatic beta cells. The protein is Beta-secretase 2 (Bace2) of Mus musculus (Mouse).